A 444-amino-acid polypeptide reads, in one-letter code: Trigger factor (444 aa).

Residues 165–250 (GDFAKFDFEG…LHEIQELKIP (86 aa)) enclose the PPIase FKBP-type domain.

It belongs to the FKBP-type PPIase family. Tig subfamily.

Its subcellular location is the cytoplasm. It carries out the reaction [protein]-peptidylproline (omega=180) = [protein]-peptidylproline (omega=0). Functionally, involved in protein export. Acts as a chaperone by maintaining the newly synthesized protein in an open conformation. Functions as a peptidyl-prolyl cis-trans isomerase. The polypeptide is Trigger factor (tig) (Campylobacter jejuni subsp. jejuni serotype O:2 (strain ATCC 700819 / NCTC 11168)).